The chain runs to 65 residues: Large ribosomal subunit protein bL35 (65 aa).

It belongs to the bacterial ribosomal protein bL35 family.

This is Large ribosomal subunit protein bL35 from Clostridium botulinum (strain Loch Maree / Type A3).